Here is a 440-residue protein sequence, read N- to C-terminus: Serine/threonine-protein kinase STK11 (440 aa).

The Protein kinase domain occupies 49-309 (YLMGDLLGEG…IQQIRQHNWF (261 aa)). ATP is bound by residues 55–63 (LGEGSYGKV) and lysine 78. Aspartate 176 (proton acceptor) is an active-site residue. Residues threonine 336 and threonine 365 each carry the phosphothreonine; by autocatalysis modification. Residues 370–440 (VPGQVPEEEA…IRKLSTCKQQ (71 aa)) form a disordered region. Over residues 430-440 (KIRKLSTCKQQ) the composition is skewed to basic residues. A Phosphoserine; by PKA modification is found at serine 435.

This sequence belongs to the protein kinase superfamily. CAMK Ser/Thr protein kinase family. LKB1 subfamily. In terms of assembly, catalytic component of a trimeric complex composed of STK11/LKB1, STRAD (STRADA or STRADB) and CAB39/MO25 (CAB39/MO25alpha or CAB39L/MO25beta). The cofactor is Mg(2+). Mn(2+) is required as a cofactor. As to expression, ubiquitously expressed in all tissues tested. High levels were observed in duodenum and skeletal muscle, lower levels in liver and pancreas.

The protein resides in the nucleus. Its subcellular location is the cytoplasm. The catalysed reaction is L-seryl-[protein] + ATP = O-phospho-L-seryl-[protein] + ADP + H(+). It catalyses the reaction L-threonyl-[protein] + ATP = O-phospho-L-threonyl-[protein] + ADP + H(+). Functionally, tumor suppressor serine/threonine-protein kinase that controls the activity of AMP-activated protein kinase (AMPK) family members, thereby playing a role in various processes such as cell metabolism, cell polarity, apoptosis and DNA damage response. Acts by phosphorylating the T-loop of AMPK family proteins, leading to promote their activity. This is Serine/threonine-protein kinase STK11 from Gallus gallus (Chicken).